Reading from the N-terminus, the 451-residue chain is MLSPAMISLPWRPDAAEYYFSPLSSQPWAMLLHSGFAEHAHNRFDIIVAQPRATLVTHGQLTTLREGETVSTSAADPLTLVHQQLAHCNLQPQPHPHLPFLGGALGLFGYDLGRRFEHLPARADADIELPDMAVGIYDWALIVDHQRREVSLFSYDDPQARLAWLEAQTAPVAATFTLTSAWRANMSREEYGEKFRQIQAYLHSGDCYQVNLAQRFTATYRGDEWQAFRQLNRANRAPFSAFIRLDEGAVLSLSPERFIQLRQGDIQTRPIKGTLPRLADPEQDALQQQKLANSPKDRAENLMIVDLMRNDIGRVAEPGSVRVPELFVVEPFPAVHHLVSTVTARLPAHLHAADLLRAAFPGGSITGAPKVRAMEIIDELEPQRRNAWCGSIGYLSFCGNMDSSITIRTLTAWQGHLYCSAGGGIVADSEEAAEYQETFDKVNRILHQLES.

L-tryptophan is bound by residues serine 34, 41–44 (HNRF), and 238–240 (PFS). Catalysis depends on glutamate 256, which acts as the Proton donor. Catalysis depends on lysine 272, which acts as the N6-(4-deoxychorismate)-lysine intermediate.

This sequence belongs to the anthranilate synthase component I family. As to quaternary structure, monomer. Heterodimer consisting of two non-identical subunits: a glutamine amidotransferase subunit (PabA) and a aminodeoxychorismate synthase subunit (PabB). It depends on Mg(2+) as a cofactor.

The catalysed reaction is chorismate + L-glutamine = 4-amino-4-deoxychorismate + L-glutamate. It functions in the pathway cofactor biosynthesis; tetrahydrofolate biosynthesis; 4-aminobenzoate from chorismate: step 1/2. Functionally, part of a heterodimeric complex that catalyzes the two-step biosynthesis of 4-amino-4-deoxychorismate (ADC), a precursor of p-aminobenzoate (PABA) and tetrahydrofolate. In the first step, a glutamine amidotransferase (PabA) generates ammonia as a substrate that, along with chorismate, is used in the second step, catalyzed by aminodeoxychorismate synthase (PabB) to produce ADC. The protein is Aminodeoxychorismate synthase component 1 (pabB) of Klebsiella aerogenes (Enterobacter aerogenes).